Here is a 166-residue protein sequence, read N- to C-terminus: Small ribosomal subunit protein uS5 (166 aa).

One can recognise an S5 DRBM domain in the interval L11–V74.

The protein belongs to the universal ribosomal protein uS5 family. Part of the 30S ribosomal subunit. Contacts proteins S4 and S8.

With S4 and S12 plays an important role in translational accuracy. Its function is as follows. Located at the back of the 30S subunit body where it stabilizes the conformation of the head with respect to the body. This Photorhabdus laumondii subsp. laumondii (strain DSM 15139 / CIP 105565 / TT01) (Photorhabdus luminescens subsp. laumondii) protein is Small ribosomal subunit protein uS5.